A 1574-amino-acid polypeptide reads, in one-letter code: Synaptojanin-1 (1574 aa).

The SAC domain occupies 119–442 (VRKVLNSGNF…GDSISKIYAG (324 aa)). Residues 500–899 (GSLRVSEQTL…GPPDGTVLVS (400 aa)) form a catalytic region. Residues serine 820 and serine 830 each carry the phosphoserine modification. The region spanning 894–971 (GTVLVSIKSS…RTITITLKSP (78 aa)) is the RRM domain. Residues 1029–1054 (HLQPSSSSGLGTSPSSSPRTSPCQSP) show a composition bias toward low complexity. The segment at 1029–1327 (HLQPSSSSGL…GVKQEPTLKS (299 aa)) is disordered. Serine 1053 carries the phosphoserine modification. Residues 1090–1100 (PAAQKESSQTI) are compositionally biased toward polar residues. Residues 1105 to 1127 (PPPPRPVAPPARPAPPQRPPPPS) are compositionally biased toward pro residues. A phosphoserine mark is found at serine 1147 and serine 1175. An Omega-N-methylarginine modification is found at arginine 1198. Position 1217 is a phosphothreonine (threonine 1217). Over residues 1287 to 1310 (SRSSQSLPSDSSPQLQQEQPTGQQ) the composition is skewed to low complexity. Phosphoserine occurs at positions 1289 and 1350. Threonine 1354 bears the Phosphothreonine mark. Disordered stretches follow at residues 1382–1519 (TMPP…SFDD) and 1532–1574 (LPAR…FTER). Residues 1389 to 1413 (QSKSQESVGSSANPFPSLPTRNPFT) show a composition bias toward polar residues. 3 repeat units span residues 1401 to 1403 (NPF), 1410 to 1412 (NPF), and 1421 to 1423 (NPF). The 3 X 3 AA repeats of N-P-F stretch occupies residues 1401–1423 (NPFPSLPTRNPFTDRTAAPGNPF). Polar residues-rich tracts occupy residues 1424 to 1436 (RVQS…TSWL) and 1472 to 1484 (DLQS…TSNP). Residues 1535-1548 (RRPPPPPPPVPLLP) show a composition bias toward pro residues. Positions 1549–1563 (PGTTSSAGPSTTLSS) are enriched in low complexity. The residue at position 1566 (serine 1566) is a Phosphoserine.

Belongs to the synaptojanin family. The protein in the central section; belongs to the inositol 1,4,5-trisphosphate 5-phosphatase family. As to quaternary structure, interacts with ASH/GRB2. Interacts with PACSIN1, PACSIN2 and PACSIN3. Interacts with AMPH, SH3GL1, SH3GL2 and SH3GL3. Interacts with MYO1E (via SH3 domain). Interacts with BIN1 and DNM1. Interacts with EPS15. As to expression, found in neonatal brain, and in a wide variety of adult non-neuronal tissues. Concentrated at clathrin-coated endocytic intermediates in nerve terminals. Also detected in the lung and heart. Expressed at higher levels than isoform 2 in the testis and liver and is not detected in the skeletal muscle. In terms of tissue distribution, expressed predominantly in the neurons, but is also found in all other tissues at much lower levels. Also detected in the lung and heart. Epressed at lower levels than isoform 1 in the testis and liver and is not detected in the skeletal muscle. Expressed in the brain.

The protein localises to the membrane. Its subcellular location is the cytoplasm. The protein resides in the perinuclear region. It carries out the reaction a 1,2-diacyl-sn-glycero-3-phospho-(1D-myo-inositol-4,5-bisphosphate) + H2O = a 1,2-diacyl-sn-glycero-3-phospho-(1D-myo-inositol 4-phosphate) + phosphate. Its function is as follows. Phosphatase that acts on various phosphoinositides, including phosphatidylinositol 4-phosphate, phosphatidylinositol (4,5)-bisphosphate and phosphatidylinositol (3,4,5)-trisphosphate. Has a role in clathrin-mediated endocytosis. Hydrolyzes PIP2 bound to actin regulatory proteins resulting in the rearrangement of actin filaments downstream of tyrosine kinase and ASH/GRB2. This chain is Synaptojanin-1 (Synj1), found in Rattus norvegicus (Rat).